We begin with the raw amino-acid sequence, 222 residues long: uncharacterized protein (222 aa).

Residues 8–77 (AKKNQIIYRY…NTPGYFVCKD (70 aa)) enclose the HTH gntR-type domain.

This is an uncharacterized protein from Mycoplasma genitalium (strain ATCC 33530 / DSM 19775 / NCTC 10195 / G37) (Mycoplasmoides genitalium).